We begin with the raw amino-acid sequence, 1053 residues long: Carbamoyl phosphate synthase large chain (1053 aa).

A carboxyphosphate synthetic domain region spans residues Met1 to Asp397. ATP contacts are provided by Arg127, Arg167, Gly173, Gly174, Glu206, Val208, Glu213, Gly239, Val240, His241, Gln282, and Glu294. In terms of domain architecture, ATP-grasp 1 spans Lys131 to Ile323. The Mg(2+) site is built by Gln282, Glu294, and Asn296. Mn(2+) is bound by residues Gln282, Glu294, and Asn296. The interval Thr398–Leu530 is oligomerization domain. The segment at Thr531–Thr919 is carbamoyl phosphate synthetic domain. The 192-residue stretch at Ser661–Leu852 folds into the ATP-grasp 2 domain. 10 residues coordinate ATP: Arg697, Arg736, Leu738, Glu743, Gly768, Val769, His770, Ser771, Gln811, and Glu823. Residues Gln811, Glu823, and Asn825 each coordinate Mg(2+). Positions 811, 823, and 825 each coordinate Mn(2+). An MGS-like domain is found at Asn918–Ser1053. Residues Ile920–Ser1053 are allosteric domain.

This sequence belongs to the CarB family. In terms of assembly, composed of two chains; the small (or glutamine) chain promotes the hydrolysis of glutamine to ammonia, which is used by the large (or ammonia) chain to synthesize carbamoyl phosphate. Tetramer of heterodimers (alpha,beta)4. Mg(2+) serves as cofactor. It depends on Mn(2+) as a cofactor.

The catalysed reaction is hydrogencarbonate + L-glutamine + 2 ATP + H2O = carbamoyl phosphate + L-glutamate + 2 ADP + phosphate + 2 H(+). It catalyses the reaction hydrogencarbonate + NH4(+) + 2 ATP = carbamoyl phosphate + 2 ADP + phosphate + 2 H(+). It participates in amino-acid biosynthesis; L-arginine biosynthesis; carbamoyl phosphate from bicarbonate: step 1/1. It functions in the pathway pyrimidine metabolism; UMP biosynthesis via de novo pathway; (S)-dihydroorotate from bicarbonate: step 1/3. Large subunit of the glutamine-dependent carbamoyl phosphate synthetase (CPSase). CPSase catalyzes the formation of carbamoyl phosphate from the ammonia moiety of glutamine, carbonate, and phosphate donated by ATP, constituting the first step of 2 biosynthetic pathways, one leading to arginine and/or urea and the other to pyrimidine nucleotides. The large subunit (synthetase) binds the substrates ammonia (free or transferred from glutamine from the small subunit), hydrogencarbonate and ATP and carries out an ATP-coupled ligase reaction, activating hydrogencarbonate by forming carboxy phosphate which reacts with ammonia to form carbamoyl phosphate. The protein is Carbamoyl phosphate synthase large chain of Methanocorpusculum labreanum (strain ATCC 43576 / DSM 4855 / Z).